We begin with the raw amino-acid sequence, 452 residues long: Cysteine--tRNA ligase (452 aa).

Residue Cys-27 participates in Zn(2+) binding. Positions 29-39 (PTVQDHFHIGH) match the 'HIGH' region motif. Zn(2+) is bound by residues Asp-207, His-232, and Glu-236. Positions 265 to 269 (KMSKS) match the 'KMSKS' region motif. Lys-268 contributes to the ATP binding site.

Belongs to the class-I aminoacyl-tRNA synthetase family. The cofactor is Zn(2+).

It is found in the cytoplasm. The enzyme catalyses tRNA(Cys) + L-cysteine + ATP = L-cysteinyl-tRNA(Cys) + AMP + diphosphate. This chain is Cysteine--tRNA ligase, found in Thermoplasma acidophilum (strain ATCC 25905 / DSM 1728 / JCM 9062 / NBRC 15155 / AMRC-C165).